A 212-amino-acid polypeptide reads, in one-letter code: Large ribosomal subunit protein uL4 (212 aa).

Residues 43 to 52 (NNRQGTASTK) show a composition bias toward polar residues. The disordered stretch occupies residues 43 to 77 (NNRQGTASTKTRSEVRGGGRKPWRQKGTGRARAGS). Positions 60 to 71 (GGRKPWRQKGTG) are enriched in basic residues.

It belongs to the universal ribosomal protein uL4 family. In terms of assembly, part of the 50S ribosomal subunit.

Functionally, one of the primary rRNA binding proteins, this protein initially binds near the 5'-end of the 23S rRNA. It is important during the early stages of 50S assembly. It makes multiple contacts with different domains of the 23S rRNA in the assembled 50S subunit and ribosome. Forms part of the polypeptide exit tunnel. In Trichodesmium erythraeum (strain IMS101), this protein is Large ribosomal subunit protein uL4.